The primary structure comprises 23 residues: Cytochrome c3-1 (23 aa).

A disordered region spans residues alanine 1–histidine 23. Histidine 23 contacts heme.

In terms of processing, binds 4 heme groups per subunit.

It localises to the periplasm. In terms of biological role, participates in sulfate respiration coupled with phosphorylation by transferring electrons from the enzyme dehydrogenase to ferredoxin. This Nitratidesulfovibrio vulgaris (Desulfovibrio vulgaris) protein is Cytochrome c3-1.